Consider the following 273-residue polypeptide: tRNA (guanine-N(7)-)-methyltransferase (273 aa).

Over residues 1–31 the composition is skewed to polar residues; the sequence is MSQHPDINTNVDATSLTDDQKSLDTNATSGN. Residues 1–36 form a disordered region; it reads MSQHPDINTNVDATSLTDDQKSLDTNATSGNEVAPD. Positions 105, 130, 157, and 179 each coordinate S-adenosyl-L-methionine. The active site involves aspartate 179. Substrate is bound by residues lysine 183, aspartate 215, and 252-255; that span reads TKFE.

Belongs to the class I-like SAM-binding methyltransferase superfamily. TrmB family.

The enzyme catalyses guanosine(46) in tRNA + S-adenosyl-L-methionine = N(7)-methylguanosine(46) in tRNA + S-adenosyl-L-homocysteine. It participates in tRNA modification; N(7)-methylguanine-tRNA biosynthesis. In terms of biological role, catalyzes the formation of N(7)-methylguanine at position 46 (m7G46) in tRNA. This chain is tRNA (guanine-N(7)-)-methyltransferase, found in Psychrobacter cryohalolentis (strain ATCC BAA-1226 / DSM 17306 / VKM B-2378 / K5).